Consider the following 208-residue polypeptide: Uracil phosphoribosyltransferase (208 aa).

Residues R78, R103, and 130 to 138 (DPMLATGGS) each bind 5-phospho-alpha-D-ribose 1-diphosphate. Uracil contacts are provided by residues I193 and 198–200 (GDA). D199 is a binding site for 5-phospho-alpha-D-ribose 1-diphosphate.

It belongs to the UPRTase family. It depends on Mg(2+) as a cofactor.

The enzyme catalyses UMP + diphosphate = 5-phospho-alpha-D-ribose 1-diphosphate + uracil. The protein operates within pyrimidine metabolism; UMP biosynthesis via salvage pathway; UMP from uracil: step 1/1. Allosterically activated by GTP. Its function is as follows. Catalyzes the conversion of uracil and 5-phospho-alpha-D-ribose 1-diphosphate (PRPP) to UMP and diphosphate. The chain is Uracil phosphoribosyltransferase from Shewanella sediminis (strain HAW-EB3).